We begin with the raw amino-acid sequence, 83 residues long: Protein YciN (83 aa).

This Escherichia coli O157:H7 protein is Protein YciN (yciN).